A 79-amino-acid polypeptide reads, in one-letter code: Orally active insecticidal peptide (79 aa).

The signal sequence occupies residues 1–19; the sequence is MRVLFIIAGLALLSVVCYT. A propeptide spanning residues 20–44 is cleaved from the precursor; that stretch reads SEMKERSSFNEVLSEFFAADEPQER. 3 disulfide bridges follow: Cys46/Cys61, Cys53/Cys66, and Cys60/Cys73. At Ala77 the chain carries Alanine amide.

Belongs to the neurotoxin 03 (Tx2) family. 01 subfamily. In terms of tissue distribution, expressed by the venom gland.

It is found in the secreted. In terms of biological role, probable ion channel inhibitor. Shows insecticidal activity when injected into mealworms. This chain is Orally active insecticidal peptide, found in Selenotypus plumipes (Australian featherleg tarantula).